The following is a 312-amino-acid chain: Aspartate carbamoyltransferase catalytic subunit (312 aa).

The carbamoyl phosphate site is built by arginine 58 and threonine 59. Lysine 86 provides a ligand contact to L-aspartate. Carbamoyl phosphate is bound by residues arginine 108, histidine 136, and glutamine 139. Arginine 169 and arginine 223 together coordinate L-aspartate. Residues glycine 264 and proline 265 each coordinate carbamoyl phosphate.

This sequence belongs to the aspartate/ornithine carbamoyltransferase superfamily. ATCase family. As to quaternary structure, heterododecamer (2C3:3R2) of six catalytic PyrB chains organized as two trimers (C3), and six regulatory PyrI chains organized as three dimers (R2).

It carries out the reaction carbamoyl phosphate + L-aspartate = N-carbamoyl-L-aspartate + phosphate + H(+). Its pathway is pyrimidine metabolism; UMP biosynthesis via de novo pathway; (S)-dihydroorotate from bicarbonate: step 2/3. In terms of biological role, catalyzes the condensation of carbamoyl phosphate and aspartate to form carbamoyl aspartate and inorganic phosphate, the committed step in the de novo pyrimidine nucleotide biosynthesis pathway. The sequence is that of Aspartate carbamoyltransferase catalytic subunit from Acetivibrio thermocellus (strain ATCC 27405 / DSM 1237 / JCM 9322 / NBRC 103400 / NCIMB 10682 / NRRL B-4536 / VPI 7372) (Clostridium thermocellum).